The following is a 314-amino-acid chain: Porphobilinogen deaminase (314 aa).

An S-(dipyrrolylmethanemethyl)cysteine modification is found at C242.

Belongs to the HMBS family. As to quaternary structure, monomer. It depends on dipyrromethane as a cofactor.

The enzyme catalyses 4 porphobilinogen + H2O = hydroxymethylbilane + 4 NH4(+). It functions in the pathway porphyrin-containing compound metabolism; protoporphyrin-IX biosynthesis; coproporphyrinogen-III from 5-aminolevulinate: step 2/4. Its function is as follows. Tetrapolymerization of the monopyrrole PBG into the hydroxymethylbilane pre-uroporphyrinogen in several discrete steps. The chain is Porphobilinogen deaminase (hemC) from Buchnera aphidicola subsp. Acyrthosiphon pisum (strain APS) (Acyrthosiphon pisum symbiotic bacterium).